Here is a 284-residue protein sequence, read N- to C-terminus: Origin of replication complex subunit 6 (284 aa).

The protein belongs to the ORC6 family. In terms of assembly, component of the origin recognition complex (ORC) composed of at least ORC1 (ORC1A or ORC1B), ORC2, ORC3, ORC4, ORC5 and ORC6. ORC is regulated in a cell-cycle and development dependent manner. It is sequentially assembled at the exit from anaphase of mitosis and disassembled as cells enter S phase. Interacts directly with ORC2, ORC3, ORC4 and ORC5. In terms of tissue distribution, follow a cell-cycle regulation with a peak at the G1/S-phase. Mostly expressed in siliques, flowers, flower buds and mature leaves, and, to a lower exent, in roots, leaves and stems.

The protein localises to the nucleus. Its function is as follows. Component of the origin recognition complex (ORC) that binds origins of replication. DNA-binding is ATP-dependent. The specific DNA sequences that define origins of replication have not been identified yet. ORC is required to assemble the pre-replication complex necessary to initiate DNA replication. The protein is Origin of replication complex subunit 6 of Arabidopsis thaliana (Mouse-ear cress).